The chain runs to 613 residues: Autophagy-related protein 22-2 (613 aa).

Residues 1–30 (MAFNSTPPVSPGGEAQQRPPRFPGEDTTPT) are disordered. The helical transmembrane segment at 41–61 (YGIAAEVFAVCGVGSFLPLTL) threads the bilayer. Asn-90 carries N-linked (GlcNAc...) asparagine glycosylation. A run of 7 helical transmembrane segments spans residues 120 to 140 (SFAMYTFSLAVLVQALTLISF), 167 to 187 (LFIFIAPPVYILASLLVVVGV), 189 to 209 (CLGSSFVVLNSFLPVLVANDP), 278 to 298 (VGLGYCAAVLVQILSILMLFA), 307 to 327 (ISGTLPLRFVLLLVGIWWFSF), 382 to 402 (VIIFLIAWFLLSDAMATVSGT), and 418 to 438 (VGLLSITATLSGMAGAFLWPV). N-linked (GlcNAc...) asparagine glycosylation occurs at Asn-448. The next 4 helical transmembrane spans lie at 453-473 (LCIALFEVIPLYGMLAYIPLF), 477-497 (GVVGLQQPWEIFPLGIVHGLV), 508-528 (FFGLLIPPGSEAAFYALYAAT), and 553-573 (GFFFIAVLILLPIPLIWMVNA). Residues 592-613 (REHASEYGGPSEEAEGLLARDI) form a disordered region.

It belongs to the ATG22 family.

It is found in the vacuole membrane. In terms of biological role, vacuolar effluxer which mediate the efflux of amino acids resulting from autophagic degradation. The release of autophagic amino acids allows the maintenance of protein synthesis and viability during nitrogen starvation. The polypeptide is Autophagy-related protein 22-2 (atg22-2) (Aspergillus fumigatus (strain ATCC MYA-4609 / CBS 101355 / FGSC A1100 / Af293) (Neosartorya fumigata)).